Consider the following 318-residue polypeptide: Aspartate carbamoyltransferase catalytic subunit (318 aa).

R58 and T59 together coordinate carbamoyl phosphate. K86 lines the L-aspartate pocket. R108, H141, and Q144 together coordinate carbamoyl phosphate. L-aspartate-binding residues include R174 and R226. Positions 270 and 271 each coordinate carbamoyl phosphate.

This sequence belongs to the aspartate/ornithine carbamoyltransferase superfamily. ATCase family. As to quaternary structure, heterododecamer (2C3:3R2) of six catalytic PyrB chains organized as two trimers (C3), and six regulatory PyrI chains organized as three dimers (R2).

The enzyme catalyses carbamoyl phosphate + L-aspartate = N-carbamoyl-L-aspartate + phosphate + H(+). The protein operates within pyrimidine metabolism; UMP biosynthesis via de novo pathway; (S)-dihydroorotate from bicarbonate: step 2/3. Catalyzes the condensation of carbamoyl phosphate and aspartate to form carbamoyl aspartate and inorganic phosphate, the committed step in the de novo pyrimidine nucleotide biosynthesis pathway. The polypeptide is Aspartate carbamoyltransferase catalytic subunit (Lactobacillus delbrueckii subsp. bulgaricus (strain ATCC 11842 / DSM 20081 / BCRC 10696 / JCM 1002 / NBRC 13953 / NCIMB 11778 / NCTC 12712 / WDCM 00102 / Lb 14)).